The sequence spans 666 residues: Protein scarlet (666 aa).

Topologically, residues 1 to 417 (MSDSDSKRID…TIQWLRFIQK (417 aa)) are cytoplasmic. The tract at residues 26 to 55 (PVGSTIEVPSLDSTPKLSKRNSSERSLPLR) is disordered. Residues 69–316 (LVWRDLCVYT…FANHGYYCPE (248 aa)) enclose the ABC transporter domain. Position 108–115 (108–115 (GSSGSGKT)) interacts with ATP. A helical membrane pass occupies residues 418-438 (IAMAFIIGACFAGTTEPSQLG). Topologically, residues 439 to 444 (VQAVQG) are extracellular. A helical transmembrane segment spans residues 445 to 465 (ALFIMISENTYHPMYSVLNLF). Residues 466 to 490 (PQGFPLFMRETRSGLYSTGQYYAAN) are Cytoplasmic-facing. A helical membrane pass occupies residues 491-511 (ILALLPGMIIEPLIFVIICYW). At 512-518 (LTGLRST) the chain is on the extracellular side. A helical transmembrane segment spans residues 519 to 539 (FYAFGVTAMCVVLVMNVATAC). Residues 540–551 (GCFFSTAFNSVP) are Cytoplasmic-facing. A helical membrane pass occupies residues 552–572 (LAMAYLVPLDYIFMITSGIFI). Residues 573–639 (QVNSLPVAFW…YSFNESNVYR (67 aa)) lie on the Extracellular side of the membrane. Residues Asn-607 and Asn-633 are each glycosylated (N-linked (GlcNAc...) asparagine). The chain crosses the membrane as a helical span at residues 640–660 (NLLAMVGLYFGFHLLGYYCLW). The Cytoplasmic segment spans residues 661–666 (RRARKL).

The protein belongs to the ABC transporter superfamily. ABCG family. Eye pigment precursor importer (TC 3.A.1.204) subfamily. May form a heterodimer with w/white. In terms of tissue distribution, expressed in the eye, specifically in primary pigment cells, secondary pigment cells and retinula cells (at protein level).

Its subcellular location is the cytoplasmic vesicle membrane. It catalyses the reaction L-kynurenine(out) + ATP + H2O = L-kynurenine(in) + ADP + phosphate + H(+). ATP-dependent transporter of the ATP-binding cassette (ABC) family which transports various molecules including bioamines, neurotransmitters and metabolic intermediates. In the eye and probably in association with w/white, required for the transport of the eye brown pigment precursors, kynurenine and probably tryptophan, into pigment cell granules. In Malpighian tubules and pupal eyes, involved in kynurenine transport. Probably in association with w/white, plays a role in zinc storage granule biogenesis in Malpighian tubule principal epithelial cells. This Drosophila melanogaster (Fruit fly) protein is Protein scarlet.